We begin with the raw amino-acid sequence, 734 residues long: Subtilisin-like protease (734 aa).

Residues 1-20 (MTCICIFSIAFLLSFHLTTA) form the signal peptide. Residues 28–109 (TYIVHVDKPD…AKLEKVLTLH (82 aa)) enclose the Inhibitor I9 domain. One can recognise a Peptidase S8 domain in the interval 114 to 591 (PNFLGLYQNM…AGHVNPSKAS (478 aa)). The Charge relay system role is filled by Asp141. Asn172 carries an N-linked (GlcNAc...) asparagine glycan. The active-site Charge relay system is His199. Residues Asn222 and Asn306 are each glycosylated (N-linked (GlcNAc...) asparagine). In terms of domain architecture, PA spans 357–442 (PLVYPGTSDE…THVGYAAGEM (86 aa)). N-linked (GlcNAc...) asparagine glycans are attached at residues Asn448 and Asn509. The Charge relay system role is filled by Ser524. Asn652 carries an N-linked (GlcNAc...) asparagine glycan.

Belongs to the peptidase S8 family.

The protein localises to the secreted. The protein resides in the extracellular space. It is found in the apoplast. In terms of biological role, required for arbuscular mycorrhiza (AM) development during AM symbiosis with AM fungi (e.g. Glomeromycota intraradices). The polypeptide is Subtilisin-like protease (Petunia hybrida (Petunia)).